Consider the following 272-residue polypeptide: NADH-dependent L-xylulose reductase (272 aa).

Positions 24 and 78 each coordinate NADP(+). Catalysis depends on serine 160, which acts as the Proton donor. The NADP(+) site is built by tyrosine 175, lysine 179, and isoleucine 208. Tyrosine 175 acts as the Proton acceptor in catalysis. Residue lysine 179 is the Lowers pKa of active site Tyr of the active site.

It belongs to the short-chain dehydrogenases/reductases (SDR) family.

The enzyme catalyses xylitol + NAD(+) = L-xylulose + NADH + H(+). It catalyses the reaction D-arabinitol + NAD(+) = D-ribulose + NADH + H(+). In terms of biological role, NADH-dependent L-xylulose reductase; part of the yeast pathway for L-arabinose catabolism. Reversibly converts L-xylulose to xylitol and D-ribulose to D-arabinitol. It has a much lower activity with D-xylulose. Sugar alcohols can serve as a substrate when the hydroxyl group of C-2 is in the L- and the hydroxyl group of the C-3 is in the D-configuration. Also seems to be specific for sugar alcohols that have not more than 5 carbons since no activity is observed with dulcitol (galactitol), which has the hydroxyl group of C-2 in L- and of C-3 in D-configuration, but is a six-carbon sugar alcohol. The polypeptide is NADH-dependent L-xylulose reductase (Ambrosiozyma monospora (Yeast)).